The primary structure comprises 394 residues: Acetate kinase 1 (394 aa).

A Mg(2+)-binding site is contributed by asparagine 8. Position 15 (lysine 15) interacts with ATP. Arginine 90 contributes to the substrate binding site. The active-site Proton donor/acceptor is aspartate 147. ATP contacts are provided by residues 207 to 211 (HLGSG) and 282 to 284 (DMR). Position 382 (glutamate 382) interacts with Mg(2+).

The protein belongs to the acetokinase family. Homodimer. Mg(2+) is required as a cofactor. It depends on Mn(2+) as a cofactor.

Its subcellular location is the cytoplasm. The catalysed reaction is acetate + ATP = acetyl phosphate + ADP. It functions in the pathway metabolic intermediate biosynthesis; acetyl-CoA biosynthesis; acetyl-CoA from acetate: step 1/2. In terms of biological role, catalyzes the formation of acetyl phosphate from acetate and ATP. Can also catalyze the reverse reaction. The sequence is that of Acetate kinase 1 from Latilactobacillus sakei subsp. sakei (strain 23K) (Lactobacillus sakei subsp. sakei).